Here is a 626-residue protein sequence, read N- to C-terminus: Chaperone protein HtpG (626 aa).

The a; substrate-binding stretch occupies residues Met1–Arg339. The interval Glu340 to Lys555 is b. The segment at Leu556 to Gly626 is c.

It belongs to the heat shock protein 90 family. Homodimer.

Its subcellular location is the cytoplasm. In terms of biological role, molecular chaperone. Has ATPase activity. The protein is Chaperone protein HtpG of Haemophilus influenzae (strain 86-028NP).